The primary structure comprises 251 residues: 3-deoxy-manno-octulosonate cytidylyltransferase (251 aa).

This sequence belongs to the KdsB family.

It localises to the cytoplasm. The catalysed reaction is 3-deoxy-alpha-D-manno-oct-2-ulosonate + CTP = CMP-3-deoxy-beta-D-manno-octulosonate + diphosphate. The protein operates within nucleotide-sugar biosynthesis; CMP-3-deoxy-D-manno-octulosonate biosynthesis; CMP-3-deoxy-D-manno-octulosonate from 3-deoxy-D-manno-octulosonate and CTP: step 1/1. It functions in the pathway bacterial outer membrane biogenesis; lipopolysaccharide biosynthesis. Activates KDO (a required 8-carbon sugar) for incorporation into bacterial lipopolysaccharide in Gram-negative bacteria. This is 3-deoxy-manno-octulosonate cytidylyltransferase from Rhizobium etli (strain CIAT 652).